The primary structure comprises 385 residues: V-type proton ATPase subunit C (385 aa).

This sequence belongs to the V-ATPase C subunit family. As to quaternary structure, V-ATPase is a heteromultimeric enzyme made up of two complexes: the ATP-hydrolytic V1 complex and the proton translocation V0 complex. The V1 complex consists of three catalytic AB heterodimers that form a heterohexamer, three peripheral stalks each consisting of EG heterodimers, one central rotor including subunits D and F, and the regulatory subunits C and H. The proton translocation complex V0 consists of the proton transport subunit a, a ring of proteolipid subunits c9c'', rotary subunit d, subunits e and f, and the accessory subunits VhaAC45 and ATP6AP2.

Functionally, subunit of the V1 complex of vacuolar(H+)-ATPase (V-ATPase), a multisubunit enzyme composed of a peripheral complex (V1) that hydrolyzes ATP and a membrane integral complex (V0) that translocates protons. V-ATPase is responsible for acidifying and maintaining the pH of intracellular compartments and in some cell types, is targeted to the plasma membrane, where it is responsible for acidifying the extracellular environment. Subunit C is necessary for the assembly of the catalytic sector of the enzyme and is likely to have a specific function in its catalytic activity. This Manduca sexta (Tobacco hawkmoth) protein is V-type proton ATPase subunit C.